Here is a 350-residue protein sequence, read N- to C-terminus: Dihydroorotase (350 aa).

2 residues coordinate Zn(2+): His-17 and His-19. Substrate contacts are provided by residues His-19–Arg-21 and Asn-45. Residues Lys-103, His-140, and His-178 each coordinate Zn(2+). Lys-103 carries the post-translational modification N6-carboxylysine. Substrate is bound at residue His-140. Position 223 (Leu-223) interacts with substrate. Zn(2+) is bound at residue Asp-251. The active site involves Asp-251. Substrate is bound by residues His-255 and Ala-267.

The protein belongs to the metallo-dependent hydrolases superfamily. DHOase family. Class II DHOase subfamily. As to quaternary structure, homodimer. The cofactor is Zn(2+).

It catalyses the reaction (S)-dihydroorotate + H2O = N-carbamoyl-L-aspartate + H(+). It participates in pyrimidine metabolism; UMP biosynthesis via de novo pathway; (S)-dihydroorotate from bicarbonate: step 3/3. Catalyzes the reversible cyclization of carbamoyl aspartate to dihydroorotate. This Erwinia tasmaniensis (strain DSM 17950 / CFBP 7177 / CIP 109463 / NCPPB 4357 / Et1/99) protein is Dihydroorotase.